A 279-amino-acid chain; its full sequence is Diaminopimelate epimerase (279 aa).

2 residues coordinate substrate: Asn14 and Gln68. Cys77 serves as the catalytic Proton donor. Substrate-binding positions include 78–79, Asn191, and 207–208; these read GN and ER. Cys217 (proton acceptor) is an active-site residue. Residue 218 to 219 coordinates substrate; sequence GT.

This sequence belongs to the diaminopimelate epimerase family. In terms of assembly, homodimer.

Its subcellular location is the cytoplasm. The catalysed reaction is (2S,6S)-2,6-diaminopimelate = meso-2,6-diaminopimelate. It functions in the pathway amino-acid biosynthesis; L-lysine biosynthesis via DAP pathway; DL-2,6-diaminopimelate from LL-2,6-diaminopimelate: step 1/1. Its function is as follows. Catalyzes the stereoinversion of LL-2,6-diaminopimelate (L,L-DAP) to meso-diaminopimelate (meso-DAP), a precursor of L-lysine. The protein is Diaminopimelate epimerase of Methanothrix thermoacetophila (strain DSM 6194 / JCM 14653 / NBRC 101360 / PT) (Methanosaeta thermophila).